We begin with the raw amino-acid sequence, 212 residues long: Large ribosomal subunit protein uL3 (212 aa).

The segment at 130 to 155 is disordered; the sequence is KRGNMTHGSKNHRLPGSTGAGTTPGR.

Belongs to the universal ribosomal protein uL3 family. As to quaternary structure, part of the 50S ribosomal subunit. Forms a cluster with proteins L14 and L19.

Functionally, one of the primary rRNA binding proteins, it binds directly near the 3'-end of the 23S rRNA, where it nucleates assembly of the 50S subunit. The sequence is that of Large ribosomal subunit protein uL3 from Rippkaea orientalis (strain PCC 8801 / RF-1) (Cyanothece sp. (strain PCC 8801)).